Consider the following 572-residue polypeptide: Nuclear hormone receptor family member nhr-25 (572 aa).

Positions 15 to 90 (GEMCPVCGDR…MGMKMEAVRA (76 aa)) form a DNA-binding region, nuclear receptor. NR C4-type zinc fingers lie at residues 18 to 38 (CPVCGDRVSGYHYGLLTCESC) and 54 to 78 (CSAEANCHVDRTCRKRCPSCRFQKC). The NR LBD domain maps to 307–567 (PTEKTVDHFY…PTPQATYTAV (261 aa)).

Belongs to the nuclear hormone receptor family. In terms of assembly, interacts with lin-39. Interacts with nob-1. Expressed in the epidermis, the developing somatic gonad, and a subset of other epithelial cells.

Its subcellular location is the nucleus. Functionally, orphan nuclear receptor and probable transcription activator, required during development. Plays a role in male tail tip morphogenesis regulating the expression of the transcription factor dmd-3 in a negative feedback loop. Regulates vulval precursor cell (VPC) differentiation, in concert with homeobox protein lin-39. Involved in promoting embryogenesis, in concert with homeobox protein nob-1. May play a role in modulation of lifespan and immunity. The chain is Nuclear hormone receptor family member nhr-25 from Caenorhabditis elegans.